A 1741-amino-acid chain; its full sequence is DNA-directed RNA polymerase III subunit RPC1 (1741 aa).

Zn(2+) contacts are provided by cysteine 79, cysteine 82, cysteine 89, histidine 92, cysteine 119, cysteine 122, and cysteine 160. Residues aspartate 722, aspartate 724, and aspartate 726 each contribute to the Mg(2+) site. Positions 1099–1111 (PFEFLAHARAGRD) are bridging helix. A disordered region spans residues 1719-1741 (RHANKRSWSRGKERHASLKPKNR).

It belongs to the RNA polymerase beta' chain family. As to quaternary structure, component of the RNA polymerase III (Pol III) complex consisting of 17 subunits.

It is found in the nucleus. The enzyme catalyses RNA(n) + a ribonucleoside 5'-triphosphate = RNA(n+1) + diphosphate. In terms of biological role, DNA-dependent RNA polymerase catalyzes the transcription of DNA into RNA using the four ribonucleoside triphosphates as substrates. Largest and catalytic core component of RNA polymerase III which synthesizes small RNAs, such as 5S rRNA and tRNAs. Forms the polymerase active center together with the second largest subunit. A single-stranded DNA template strand of the promoter is positioned within the central active site cleft of Pol III. A bridging helix emanates from RPC1 and crosses the cleft near the catalytic site and is thought to promote translocation of Pol III by acting as a ratchet that moves the RNA-DNA hybrid through the active site by switching from straight to bent conformations at each step of nucleotide addition. This is DNA-directed RNA polymerase III subunit RPC1 (RPOA3) from Giardia intestinalis (Giardia lamblia).